The following is a 24-amino-acid chain: 47 kDa cell wall protein (24 aa).

The protein resides in the secreted. Its subcellular location is the cell wall. In Nicotiana tabacum (Common tobacco), this protein is 47 kDa cell wall protein.